The following is a 273-amino-acid chain: Undecaprenyl-diphosphatase (273 aa).

Transmembrane regions (helical) follow at residues 3-23 (IILWLQAVILGLVQGMTEFLP), 47-67 (ALDAMQFGSVIAVLGYFWQDI), 90-110 (LLLGITVGTIPALAAGLLLKL), 120-140 (IIATMAIAMAILLGLAEQWGS), 148-168 (IGILDGFLVGCGQMIALLPGA), 186-206 (PTAARFSFLLGIPTLTIATLV), 217-237 (LLIPLVIATLSSMVFSYLAIA), and 249-269 (WVFIWYRIGLGSALWGAIALG).

The protein belongs to the UppP family.

It localises to the cell inner membrane. It carries out the reaction di-trans,octa-cis-undecaprenyl diphosphate + H2O = di-trans,octa-cis-undecaprenyl phosphate + phosphate + H(+). Its function is as follows. Catalyzes the dephosphorylation of undecaprenyl diphosphate (UPP). Confers resistance to bacitracin. The protein is Undecaprenyl-diphosphatase of Thermosynechococcus vestitus (strain NIES-2133 / IAM M-273 / BP-1).